Consider the following 95-residue polypeptide: Small ribosomal subunit protein bS6 (95 aa).

This sequence belongs to the bacterial ribosomal protein bS6 family.

Functionally, binds together with bS18 to 16S ribosomal RNA. The protein is Small ribosomal subunit protein bS6 of Desulforamulus reducens (strain ATCC BAA-1160 / DSM 100696 / MI-1) (Desulfotomaculum reducens).